Reading from the N-terminus, the 557-residue chain is Aerobic glycerol-3-phosphate dehydrogenase (557 aa).

21–49 (DVVIVGGGITGAGIALDASNRGMKVALVE) is an FAD binding site.

The protein belongs to the FAD-dependent glycerol-3-phosphate dehydrogenase family. It depends on FAD as a cofactor.

The protein localises to the cytoplasm. The enzyme catalyses a quinone + sn-glycerol 3-phosphate = dihydroxyacetone phosphate + a quinol. Its pathway is polyol metabolism; glycerol degradation via glycerol kinase pathway; glycerone phosphate from sn-glycerol 3-phosphate (aerobic route): step 1/1. In Staphylococcus epidermidis (strain ATCC 35984 / DSM 28319 / BCRC 17069 / CCUG 31568 / BM 3577 / RP62A), this protein is Aerobic glycerol-3-phosphate dehydrogenase (glpD).